The sequence spans 53 residues: uncharacterized protein (53 aa).

This sequence belongs to the ycf15 family.

Its subcellular location is the plastid. The protein resides in the chloroplast. This is an uncharacterized protein from Helianthus annuus (Common sunflower).